The sequence spans 221 residues: 7-cyano-7-deazaguanine synthase (221 aa).

L7–L17 provides a ligand contact to ATP. The Zn(2+) site is built by C192, C200, C203, and C206.

It belongs to the QueC family. Homodimer. The cofactor is Zn(2+).

It carries out the reaction 7-carboxy-7-deazaguanine + NH4(+) + ATP = 7-cyano-7-deazaguanine + ADP + phosphate + H2O + H(+). Its pathway is purine metabolism; 7-cyano-7-deazaguanine biosynthesis. Catalyzes the ATP-dependent conversion of 7-carboxy-7-deazaguanine (CDG) to 7-cyano-7-deazaguanine (preQ(0)). This chain is 7-cyano-7-deazaguanine synthase, found in Pelotomaculum thermopropionicum (strain DSM 13744 / JCM 10971 / SI).